The following is a 31-amino-acid chain: Cyclotide vico-A (31 aa).

Positions 1-31 form a cross-link, cyclopeptide (Gly-Asn); it reads GSIPCAESCVYIPCFTGIAGCSCKNKVCYYN. 3 disulfide bridges follow: Cys-5/Cys-21, Cys-9/Cys-23, and Cys-14/Cys-28.

The protein belongs to the cyclotide family. Bracelet subfamily. In terms of processing, this is a cyclic peptide.

In terms of biological role, probably participates in a plant defense mechanism. In Viola cotyledon (Violeta), this protein is Cyclotide vico-A.